We begin with the raw amino-acid sequence, 730 residues long: Guanyl-specific ribonuclease pgl-1 (730 aa).

The segment at 205 to 447 (KQLMLDGPKS…VTRIVESLEK (243 aa)) is involved in dimerization. His-437 acts as the Proton acceptor in catalysis. Composition is skewed to polar residues over residues 452–472 (DTPS…QDSA) and 568–595 (DANQ…SPTK). 3 disordered regions span residues 452–475 (DTPS…AYTK), 567–639 (SDAN…TPMP), and 686–730 (GGRG…RGGF). Residues 674-730 (GGGRGGYGGGDRGGRGGYGGDRGGRGGYGGGDRGGRGGYGGDRGRGGYGGRGGRGGF) are RNA-binding RGG-box.

As to quaternary structure, homodimer. Interacts with pgl-2 and pgl-3; this association is not required for P-granule localization of either pgl-2 or pgl-3. Interacts with ife-1. Interacts with prmt-1; the interaction is direct. Interacts with nmad-1. Interacts with P granule components meg-1, meg-3 and meg-4. Does not require metal ions for catalytic activity. serves as cofactor. Post-translationally, methylated at arginine residues in the RNA-binding RGG-box by prmt-1. Methylation promotes P-granule degradation by autophagy. In terms of tissue distribution, expressed in the germline. Expressed in most somatic cells.

Its subcellular location is the cytoplasmic granule. It carries out the reaction [RNA] containing guanosine + H2O = an [RNA fragment]-3'-guanosine-3'-phosphate + a 5'-hydroxy-ribonucleotide-3'-[RNA fragment].. With respect to regulation, not inhibited by RNase inhibitor RNasin. Its function is as follows. Guanyl-specific endoribonuclease which cleaves the phosphodiester bond in single-stranded RNA between the 3'-guanylic residue and the 5'-OH residue of adjacent nucleotide, resulting in the formation of a corresponding 2',3'-cyclic phosphate intermediate. Together with the P-granule component pgl-3, is involved in the formation of P-granules. Together with pgl-3, probably recruits other granule components such as pos-1, mex-3 and glh-1 to P-granules. In addition, may act redundantly with pgl-3 to protect germ cells from excessive germline apoptosis during normal oogenesis and development of the two gonadal arms. This may in part be through regulating the localization of sir-2.1 which is involved in germ cell apoptosis. May protect somatic cells from excessive apoptosis during normal development. Essential role in male and female postembryonic germline development; maternally provided protein maintains a population of proliferating germ cells and zygotic expression is required for correct oogenesis. This is Guanyl-specific ribonuclease pgl-1 from Caenorhabditis elegans.